Reading from the N-terminus, the 270-residue chain is Replication protein A 32 kDa subunit (270 aa).

The residue at position 1 (methionine 1) is an N-acetylmethionine. Residues serine 4 and serine 8 each carry the phosphoserine; by PRKDC modification. Residue threonine 21 is modified to Phosphothreonine; by PRKDC. The disordered stretch occupies residues 21 to 40; that stretch reads TQSPGGFGSPAPSQAEKKSR. Serine 23 is modified (phosphoserine; by CDK2). Serine 29 is modified (phosphoserine; by CDK1). Serine 33 is modified (phosphoserine; by PRKDC). Residues lysine 37 and lysine 38 each participate in a glycyl lysine isopeptide (Lys-Gly) (interchain with G-Cter in ubiquitin) cross-link. Residues 74–148 constitute a DNA-binding region (OB); sequence VTIVGIIRHA…KSLVAFKIMP (75 aa). Residues 187–270 are interaction with RAD52, TIPIN, UNG and XPA; that stretch reads GMSEAGNFGG…DDHFKSTDAE (84 aa).

The protein belongs to the replication factor A protein 2 family. In terms of assembly, component of the replication protein A complex (RPA/RP-A), a heterotrimeric complex composed of RPA1, RPA2 and RPA3. Interacts with PRPF19; the PRP19-CDC5L complex is recruited to the sites of DNA repair where it ubiquitinates the replication protein A complex (RPA). Interacts with SERTAD3. Interacts with TIPIN. Interacts with TIMELESS. Interacts with PPP4R2; the interaction is direct, DNA damage-dependent and mediates the recruitment of the PP4 catalytic subunit PPP4C. Interacts (hyperphosphorylated) with RAD51. Interacts with SMARCAL1; the interaction is direct and mediates the recruitment to the RPA complex of SMARCAL1. Interacts with RAD52 and XPA; those interactions are direct and associate RAD52 and XPA to the RPA complex. Interacts with FBH1. Interacts with ETAA1; the interaction is direct and promotes ETAA1 recruitment at stalled replication forks. Interacts with DDI2. Interacts (in unphosphorylated form via N-terminus) with EIF4EBP3; the interaction enhances EIF4EBP3-mediated inhibition of EIF4E-mediated mRNA nuclear export. In terms of processing, differentially phosphorylated throughout the cell cycle, becoming phosphorylated at the G1-S transition and dephosphorylated in late mitosis. Mainly phosphorylated at Ser-23 and Ser-29, by cyclin A-CDK2 and cyclin B-CDK1, respectively during DNA replication and mitosis. Dephosphorylation may require the serine/threonine-protein phosphatase 4. Phosphorylation at Ser-23 and Ser-29 is a prerequisite for further phosphorylation. Becomes hyperphosphorylated on additional residues including Ser-4, Ser-8, Thr-21 and Ser-33 in response to DNA damage. Hyperphosphorylation is mediated by ATM, ATR and PRKDC. Primarily recruited to DNA repair nuclear foci as a hypophosphorylated form it undergoes subsequent hyperphosphorylation, catalyzed by ATR. Hyperphosphorylation is required for RAD51 recruitment to chromatin and efficient DNA repair. Phosphorylation at Thr-21 depends upon RFWD3 presence. Post-translationally, DNA damage-induced 'Lys-63'-linked polyubiquitination by PRPF19 mediates ATRIP recruitment to the RPA complex at sites of DNA damage and activation of ATR. Ubiquitinated by RFWD3 at stalled replication forks in response to DNA damage: ubiquitination by RFWD3 does not lead to degradation by the proteasome and promotes removal of the RPA complex from stalled replication forks, promoting homologous recombination.

The protein localises to the nucleus. Its subcellular location is the PML body. Its function is as follows. As part of the heterotrimeric replication protein A complex (RPA/RP-A), binds and stabilizes single-stranded DNA intermediates, that form during DNA replication or upon DNA stress. It prevents their reannealing and in parallel, recruits and activates different proteins and complexes involved in DNA metabolism. Thereby, it plays an essential role both in DNA replication and the cellular response to DNA damage. In the cellular response to DNA damage, the RPA complex controls DNA repair and DNA damage checkpoint activation. Through recruitment of ATRIP activates the ATR kinase a master regulator of the DNA damage response. It is required for the recruitment of the DNA double-strand break repair factors RAD51 and RAD52 to chromatin in response to DNA damage. Also recruits to sites of DNA damage proteins like XPA and XPG that are involved in nucleotide excision repair and is required for this mechanism of DNA repair. Also plays a role in base excision repair (BER) probably through interaction with UNG. Also recruits SMARCAL1/HARP, which is involved in replication fork restart, to sites of DNA damage. May also play a role in telomere maintenance. The protein is Replication protein A 32 kDa subunit (RPA2) of Pongo abelii (Sumatran orangutan).